Here is a 390-residue protein sequence, read N- to C-terminus: Sorting nexin C1711.11 (390 aa).

The region spanning 1 to 123 (MLKCTIKNEQ…QFLENNSWKS (123 aa)) is the PX domain. Arg44, Lys70, and Arg89 together coordinate a 1,2-diacyl-sn-glycero-3-phospho-(1D-myo-inositol-3-phosphate).

It belongs to the sorting nexin family.

The protein resides in the cytoplasm. Its subcellular location is the membrane. The protein is Sorting nexin C1711.11 of Schizosaccharomyces pombe (strain 972 / ATCC 24843) (Fission yeast).